A 241-amino-acid chain; its full sequence is Probable transcriptional regulatory protein Rpic_2388 (241 aa).

Belongs to the TACO1 family.

It localises to the cytoplasm. In Ralstonia pickettii (strain 12J), this protein is Probable transcriptional regulatory protein Rpic_2388.